A 325-amino-acid chain; its full sequence is 5-dehydro-2-deoxygluconokinase (325 aa).

Belongs to the carbohydrate kinase PfkB family.

It catalyses the reaction 5-dehydro-2-deoxy-D-gluconate + ATP = 6-phospho-5-dehydro-2-deoxy-D-gluconate + ADP + H(+). It functions in the pathway polyol metabolism; myo-inositol degradation into acetyl-CoA; acetyl-CoA from myo-inositol: step 5/7. In terms of biological role, catalyzes the phosphorylation of 5-dehydro-2-deoxy-D-gluconate (2-deoxy-5-keto-D-gluconate or DKG) to 6-phospho-5-dehydro-2-deoxy-D-gluconate (DKGP). The polypeptide is 5-dehydro-2-deoxygluconokinase (iolC) (Bacillus subtilis (strain 168)).